The following is a 434-amino-acid chain: Homogentisate 1,2-dioxygenase (434 aa).

His-289 (proton acceptor) is an active-site residue. The Fe cation site is built by His-332 and Glu-338. Residues Tyr-347 and His-368 each coordinate homogentisate. Position 368 (His-368) interacts with Fe cation.

This sequence belongs to the homogentisate dioxygenase family. In terms of assembly, hexamer; dimer of trimers. Fe cation serves as cofactor.

The catalysed reaction is homogentisate + O2 = 4-maleylacetoacetate + H(+). It functions in the pathway amino-acid degradation; L-phenylalanine degradation; acetoacetate and fumarate from L-phenylalanine: step 4/6. In terms of biological role, involved in the catabolism of homogentisate (2,5-dihydroxyphenylacetate or 2,5-OH-PhAc), a central intermediate in the degradation of phenylalanine and tyrosine. Catalyzes the oxidative ring cleavage of the aromatic ring of homogentisate to yield maleylacetoacetate. This Pseudomonas syringae pv. syringae (strain B728a) protein is Homogentisate 1,2-dioxygenase.